Here is a 448-residue protein sequence, read N- to C-terminus: Probable protein phosphatase 2C 74 (448 aa).

The segment at Met1–Glu48 is disordered. Gly2 carries the N-myristoyl glycine lipid modification. Positions Gly27–Pro37 are enriched in basic residues. Residues Thr67–Leu384 form the PPM-type phosphatase domain. Mn(2+) is bound by residues Asp103, Gly104, Asp329, and Asp375. The disordered stretch occupies residues His401–Val431. Residues Asp412–Pro426 are compositionally biased toward low complexity.

Belongs to the PP2C family. Interacts with KIN10. It depends on Mg(2+) as a cofactor. Requires Mn(2+) as cofactor. In terms of tissue distribution, expressed in the whole plant.

Its subcellular location is the cell membrane. The enzyme catalyses O-phospho-L-seryl-[protein] + H2O = L-seryl-[protein] + phosphate. It carries out the reaction O-phospho-L-threonyl-[protein] + H2O = L-threonyl-[protein] + phosphate. Its function is as follows. Acts as a protein phosphatase. The polypeptide is Probable protein phosphatase 2C 74 (Arabidopsis thaliana (Mouse-ear cress)).